The following is a 37-amino-acid chain: Esculentin-2Rb (37 aa).

A disulfide bridge connects residues cysteine 31 and cysteine 37.

As to expression, expressed by the skin glands.

The protein localises to the secreted. Antimicrobial peptide. This is Esculentin-2Rb from Pelophylax ridibundus (Marsh frog).